The chain runs to 363 residues: Cleavage and termination factor 1 (363 aa).

Residues 7-85 (NVVFVGNIPY…RKIRVEFPSN (79 aa)) form the RRM domain. The tract at residues 291 to 325 (QPASATSSPPSVPQKIPSSNHKSQQANGSDQGNEG) is disordered. Over residues 306–322 (IPSSNHKSQQANGSDQG) the composition is skewed to polar residues.

In terms of assembly, interacts with res2.

The protein resides in the nucleus. Its function is as follows. Component of the cleavage factor I (CF I) involved in pre-mRNA 3'-end processing. This Schizosaccharomyces pombe (strain 972 / ATCC 24843) (Fission yeast) protein is Cleavage and termination factor 1 (ctf1).